The primary structure comprises 447 residues: Maintenance of mitochondrial morphology protein 1 (447 aa).

Residues 1–109 (MKSPNETSFT…VFSAWSFAQG (109 aa)) are Lumenal-facing. Residues 110 to 130 (LVIGQLSVIVVLIFFIKFFIF) traverse the membrane as a helical segment. Over 131-447 (SEGPIKTEGP…DDISMKSTDL (317 aa)) the chain is Cytoplasmic. Residues 208 to 421 (SPETLDWFNV…EPRFQFIKLP (214 aa)) enclose the SMP-LTD domain.

It belongs to the MMM1 family. In terms of assembly, homodimer. Component of the ER-mitochondria encounter structure (ERMES) or MDM complex, composed of MMM1, MDM10, MDM12 and MDM34. An MMM1 homodimer associates with one molecule of MDM12 on each side in a pairwise head-to-tail manner, and the SMP-LTD domains of MMM1 and MDM12 generate a continuous hydrophobic tunnel for phospholipid trafficking.

The protein localises to the endoplasmic reticulum membrane. Component of the ERMES/MDM complex, which serves as a molecular tether to connect the endoplasmic reticulum (ER) and mitochondria. Components of this complex are involved in the control of mitochondrial shape and protein biogenesis, and function in nonvesicular lipid trafficking between the ER and mitochondria. The MDM12-MMM1 subcomplex functions in the major beta-barrel assembly pathway that is responsible for biogenesis of all outer membrane beta-barrel proteins, and acts in a late step after the SAM complex. The MDM10-MDM12-MMM1 subcomplex further acts in the TOM40-specific pathway after the action of the MDM12-MMM1 complex. Essential for establishing and maintaining the structure of mitochondria and maintenance of mtDNA nucleoids. This Lachancea thermotolerans (strain ATCC 56472 / CBS 6340 / NRRL Y-8284) (Yeast) protein is Maintenance of mitochondrial morphology protein 1.